The primary structure comprises 519 residues: 2-isopropylmalate synthase (519 aa).

Residues 12–274 (VVIFDTTLRD…WCNVESTTLT (263 aa)) enclose the Pyruvate carboxyltransferase domain. Residues aspartate 21, histidine 209, histidine 211, and asparagine 245 each coordinate Mn(2+). A regulatory domain region spans residues 398-519 (RLVSLTVIAG…QREAPVAAAS (122 aa)).

This sequence belongs to the alpha-IPM synthase/homocitrate synthase family. LeuA type 1 subfamily. Homodimer. It depends on Mn(2+) as a cofactor.

Its subcellular location is the cytoplasm. It catalyses the reaction 3-methyl-2-oxobutanoate + acetyl-CoA + H2O = (2S)-2-isopropylmalate + CoA + H(+). The protein operates within amino-acid biosynthesis; L-leucine biosynthesis; L-leucine from 3-methyl-2-oxobutanoate: step 1/4. Functionally, catalyzes the condensation of the acetyl group of acetyl-CoA with 3-methyl-2-oxobutanoate (2-ketoisovalerate) to form 3-carboxy-3-hydroxy-4-methylpentanoate (2-isopropylmalate). The chain is 2-isopropylmalate synthase from Afipia carboxidovorans (strain ATCC 49405 / DSM 1227 / KCTC 32145 / OM5) (Oligotropha carboxidovorans).